Consider the following 296-residue polypeptide: Factor associated with metabolism and energy (296 aa).

Gly-2 is lipidated: N-myristoyl glycine. Basic and acidic residues-rich tracts occupy residues 173-187 (SLHG…SPRD) and 267-281 (EQGK…LVRT). 2 disordered regions span residues 173–204 (SLHG…DDHD) and 256–281 (LLWD…LVRT).

Its subcellular location is the cell membrane. It is found in the cytoplasmic vesicle. Functionally, may be involved in tuning the metabolism, energy expenditure, and excretion processes. This chain is Factor associated with metabolism and energy, found in Homo sapiens (Human).